Reading from the N-terminus, the 525-residue chain is Acyl-CoA-binding domain-containing protein 5 (525 aa).

The region spanning 43–132 is the ACB domain; it reads HETRFEAAVK…MKKIIETMPM (90 aa). An acyl-CoA contacts are provided by residues 54–63, 74–78, Lys-100, and Tyr-119; these read IQSLPKNGSF and YSFYK. Residues 157-216 are disordered; that stretch reads RSSDITSDLDNVLTSTPNAKTVNGKAESSDSGAESEEEEAQEEVKGAEQSDNDKKMMKKS. A compositionally biased stretch (polar residues) spans 158–177; sequence SSDITSDLDNVLTSTPNAKT. Residues 181-210 are a coiled coil; the sequence is KAESSDSGAESEEEEAQEEVKGAEQSDNDK. Ser-184, Ser-185, Ser-187, Ser-191, Ser-206, Ser-270, and Ser-304 each carry phosphoserine. Residues 198 to 216 are compositionally biased toward basic and acidic residues; the sequence is EEVKGAEQSDNDKKMMKKS. Residues 367-376 show a composition bias toward basic and acidic residues; the sequence is EVKHGGEDGR. Positions 367-433 are disordered; sequence EVKHGGEDGR…ERWGSDRGSR (67 aa). Phosphoserine is present on Ser-419. Basic and acidic residues predominate over residues 422–432; it reads DGERWGSDRGS. Residues 438–467 adopt a coiled-coil conformation; it reads EQIALVLMRLQEDMQNVLQRLQKLETLTAL. Lys-460 carries the post-translational modification N6-acetyllysine. Residues 489–509 form a helical membrane-spanning segment; it reads WWPFEMSPGVLTFAIIWPFIA.

This sequence belongs to the ATG37 family.

The protein localises to the peroxisome membrane. In terms of biological role, acyl-CoA binding protein which acts as the peroxisome receptor for pexophagy but is dispensable for aggrephagy and nonselective autophagy. Binds medium- and long-chain acyl-CoA esters. The sequence is that of Acyl-CoA-binding domain-containing protein 5 (ACBD5) from Pongo abelii (Sumatran orangutan).